The sequence spans 415 residues: MSPFLYLVLLVLGLHATIHCASPEGKVTACHSSQPNATLYKMSSINADFAFNLYRRFTVETPDKNIFFSPVSISAALVMLSFGACCSTQTEIVETLGFNLTDTPMVEIQHGFQHLICSLNFPKKELELQIGNALFIGKHLKPLAKFLNDVKTLYETEVFSTDFSNISAAKQEINSHVEMQTKGKVVGLIQDLKPNTIMVLVNYIHFKAQWANPFDPSKTEDSSSFLIDKTTTVQVPMMHQMEQYYHLVDMELNCTVLQMDYSKNALALFVLPKEGQMESVEAAMSSKTLKKWNRLLQKGWVDLFVPKFSISATYDLGATLLKMGIQHAYSENADFSGLTEDNGLKLSNAAHKAVLHIGEKGTEAAAVPEVELSDQPENTFLHPIIQIDRSFMLLILERSTRSILFLGKVVNPTEA.

The N-terminal stretch at 1-20 (MSPFLYLVLLVLGLHATIHC) is a signal peptide. N-linked (GlcNAc...) (complex) asparagine glycosylation occurs at asparagine 36. A glycan (N-linked (GlcNAc...) asparagine) is linked at asparagine 99. An N-linked (GlcNAc...) asparagine; in variant Gary glycan is attached at isoleucine 116. 2 N-linked (GlcNAc...) asparagine glycosylation sites follow: asparagine 165 and asparagine 253. The thyroxine site is built by asparagine 293 and arginine 398.

It belongs to the serpin family. In terms of tissue distribution, expressed by the liver and secreted in plasma.

It is found in the secreted. In terms of biological role, major thyroid hormone transport protein in serum. This chain is Thyroxine-binding globulin (SERPINA7), found in Homo sapiens (Human).